The following is a 207-amino-acid chain: Small ribosomal subunit protein uS2 (207 aa).

The protein belongs to the universal ribosomal protein uS2 family.

The chain is Small ribosomal subunit protein uS2 from Methanocella arvoryzae (strain DSM 22066 / NBRC 105507 / MRE50).